Reading from the N-terminus, the 226-residue chain is Thioredoxin domain-containing protein 9 (226 aa).

The 107-residue stretch at 74–180 (REIPSERDFF…TTETLEWRLG (107 aa)) folds into the Thioredoxin domain. 3 positions are modified to phosphoserine: Ser-188, Ser-221, and Ser-223.

Forms ternary complexes with the chaperonin TCP1 complex, spanning the cylindrical chaperonin cavity and contacting at least 2 subunits.

The protein localises to the cytoplasm. It is found in the nucleus. It localises to the cytoskeleton. The protein resides in the microtubule organizing center. Its subcellular location is the centrosome. The protein localises to the midbody. In terms of biological role, significantly diminishes the chaperonin TCP1 complex ATPase activity, thus negatively impacts protein folding, including that of actin or tubulin. In Homo sapiens (Human), this protein is Thioredoxin domain-containing protein 9 (TXNDC9).